Reading from the N-terminus, the 105-residue chain is MITDEEIRKVIAPLLLSGAKMLDKHCPKCGSPLFEKDGRVFCPVCEYREKQKKEMVKGVEERLMEKLTQLANSLPDDIDELEKHLRVMEKIIEVLEKYKKLEGRR.

The protein belongs to the UPF0148 family.

In Pyrococcus horikoshii (strain ATCC 700860 / DSM 12428 / JCM 9974 / NBRC 100139 / OT-3), this protein is UPF0148 protein PH0795.